Consider the following 1025-residue polypeptide: Multidrug resistance protein MdtC (1025 aa).

A run of 12 helical transmembrane segments spans residues 3–23 (FFAL…AITL), 333–353 (EVEQ…FLFL), 360–380 (LIPA…MYLC), 387–407 (LSLM…IVVL), 431–451 (VGFT…PLLL), 463–483 (FAVT…TLTP), 528–548 (IVGL…ITIP), 853–873 (VILI…LYES), 875–895 (VHPL…LLAL), 897–917 (LFDA…IGIV), 953–973 (PIMM…ISSG), and 984–1004 (ITIV…TPVV).

The protein belongs to the resistance-nodulation-cell division (RND) (TC 2.A.6) family. MdtC subfamily. In terms of assembly, part of a tripartite efflux system composed of MdtA, MdtB and MdtC. MdtC forms a heteromultimer with MdtB.

Its subcellular location is the cell inner membrane. This Enterobacter sp. (strain 638) protein is Multidrug resistance protein MdtC.